Consider the following 1026-residue polypeptide: DNA polymerase catalytic subunit (1026 aa).

Residues 664–695 (LKTWLAKRKSIKKELEQCQDAKMKTILDKQQL) adopt a coiled-coil conformation.

Belongs to the DNA polymerase type-B family.

It localises to the host nucleus. The catalysed reaction is DNA(n) + a 2'-deoxyribonucleoside 5'-triphosphate = DNA(n+1) + diphosphate. Replicates viral genomic DNA. The sequence is that of DNA polymerase catalytic subunit (9) from Alcelaphine herpesvirus 1 (strain C500) (AlHV-1).